The chain runs to 163 residues: SsrA-binding protein (163 aa).

It belongs to the SmpB family.

It localises to the cytoplasm. In terms of biological role, required for rescue of stalled ribosomes mediated by trans-translation. Binds to transfer-messenger RNA (tmRNA), required for stable association of tmRNA with ribosomes. tmRNA and SmpB together mimic tRNA shape, replacing the anticodon stem-loop with SmpB. tmRNA is encoded by the ssrA gene; the 2 termini fold to resemble tRNA(Ala) and it encodes a 'tag peptide', a short internal open reading frame. During trans-translation Ala-aminoacylated tmRNA acts like a tRNA, entering the A-site of stalled ribosomes, displacing the stalled mRNA. The ribosome then switches to translate the ORF on the tmRNA; the nascent peptide is terminated with the 'tag peptide' encoded by the tmRNA and targeted for degradation. The ribosome is freed to recommence translation, which seems to be the essential function of trans-translation. This Shewanella baltica (strain OS223) protein is SsrA-binding protein.